Consider the following 263-residue polypeptide: N-acyl homoserine lactonase AttM (263 aa).

Zn(2+) contacts are provided by His103, His105, Asp107, His108, His180, Asp202, and His247.

It belongs to the metallo-beta-lactamase superfamily. Requires Zn(2+) as cofactor.

The enzyme catalyses an N-acyl-L-homoserine lactone + H2O = an N-acyl-L-homoserine + H(+). The sequence is that of N-acyl homoserine lactonase AttM from Azorhizobium caulinodans (strain ATCC 43989 / DSM 5975 / JCM 20966 / LMG 6465 / NBRC 14845 / NCIMB 13405 / ORS 571).